Reading from the N-terminus, the 633-residue chain is Chaperone protein HtpG (633 aa).

The tract at residues Met1 to Arg341 is a; substrate-binding. A b region spans residues Glu342–Arg562. The c stretch occupies residues Leu563–Ala633.

Belongs to the heat shock protein 90 family. As to quaternary structure, homodimer.

The protein resides in the cytoplasm. Its function is as follows. Molecular chaperone. Has ATPase activity. The sequence is that of Chaperone protein HtpG from Cupriavidus taiwanensis (strain DSM 17343 / BCRC 17206 / CCUG 44338 / CIP 107171 / LMG 19424 / R1) (Ralstonia taiwanensis (strain LMG 19424)).